Reading from the N-terminus, the 375-residue chain is Mitogen-activated protein kinase 1 (375 aa).

The region spanning 43–329 is the Protein kinase domain; that stretch reads RPPIMPIGRG…VEEALAHPYL (287 aa). Residues 49-57 and lysine 72 each bind ATP; that span reads IGRGAYGIV. Aspartate 169 functions as the Proton acceptor in the catalytic mechanism. Threonine 201 is modified (phosphothreonine). The short motif at 201–203 is the TXY element; sequence TEY. Tyrosine 203 carries the post-translational modification Phosphotyrosine. Phosphothreonine is present on threonine 206.

This sequence belongs to the protein kinase superfamily. CMGC Ser/Thr protein kinase family. MAP kinase subfamily. Requires Mg(2+) as cofactor. In terms of processing, activated by wounding and UV-C in a cultivar-dependent manner; phosphorylated in cv. Pungchon but not in cv. Subicho.

The catalysed reaction is L-seryl-[protein] + ATP = O-phospho-L-seryl-[protein] + ADP + H(+). The enzyme catalyses L-threonyl-[protein] + ATP = O-phospho-L-threonyl-[protein] + ADP + H(+). Activated by threonine and tyrosine phosphorylation. Stress-inducible protein kinase involved in oxidative stress-mediated and innate immune MAP kinase signaling cascades. This Capsicum annuum (Capsicum pepper) protein is Mitogen-activated protein kinase 1.